We begin with the raw amino-acid sequence, 570 residues long: MLTDIEISRQTKHRPITQIAEKFGITSSELVPFGDAKAKVKLSILKRVDDNLEGKLVIVTAVTPTPFGEGKTVTSIGLTQGLNALGKKACACIRQPSMGPVFGIKGGAAGGGYSQVVPMEELNLHLTGDIHAVSSAHNLAAAAIDARLFHESRMTADEYREQSGQAPLNIDPEKILWRRVVDHNERSLRNITVGLGANNGPIHDSGFDITAASELMAILALSLDLKDMRRRIGKLVLALDSLGQPITAETLGVAGAMTVIMSDAIEPTLMQTLTGDPCLIHAGPFANIAHGNSSIIADRIALKLADIVVTEGGFGSDMGFEKFCNIKTRVSGKTPDAAVVVVTLKALKANSGIDSQNDINRPDMARLQVGFANLKWHIDNVSQYGAPVVVAINRFPTDTFEELTWLKAKVLETAAFGCEICEGFSQGAKGAEALARVVVSATEQKSDFKFLYQLDESIESKLLTIAEAGYGAAGIKLSPDAKIQLQEINSMGLDKLAVCVAKTPLSISHEPKVKGVPTDFELPITQLKINAGAGFITALVGKVMTMPGLGIKPGYLNVDINEDDEIVGLA.

Residue threonine 65–threonine 72 coordinates ATP.

The protein belongs to the formate--tetrahydrofolate ligase family.

The enzyme catalyses (6S)-5,6,7,8-tetrahydrofolate + formate + ATP = (6R)-10-formyltetrahydrofolate + ADP + phosphate. Its pathway is one-carbon metabolism; tetrahydrofolate interconversion. This Shewanella sediminis (strain HAW-EB3) protein is Formate--tetrahydrofolate ligase.